The sequence spans 172 residues: Small ribosomal subunit protein uS5 (172 aa).

The S5 DRBM domain occupies 17–80; the sequence is LREKMISVNR…EQARRNMFKV (64 aa).

It belongs to the universal ribosomal protein uS5 family. As to quaternary structure, part of the 30S ribosomal subunit. Contacts proteins S4 and S8.

Its function is as follows. With S4 and S12 plays an important role in translational accuracy. Functionally, located at the back of the 30S subunit body where it stabilizes the conformation of the head with respect to the body. The polypeptide is Small ribosomal subunit protein uS5 (Paraburkholderia xenovorans (strain LB400)).